The following is a 231-amino-acid chain: Lipoprotein-releasing system ATP-binding protein LolD (231 aa).

The ABC transporter domain occupies 9 to 230 (FSLKDVGKEY…LRAGELYDQN (222 aa)). An ATP-binding site is contributed by 45–52 (GASGSGKS).

Belongs to the ABC transporter superfamily. Lipoprotein translocase (TC 3.A.1.125) family. The complex is composed of two ATP-binding proteins (LolD) and two transmembrane proteins (LolC and LolE).

Its subcellular location is the cell inner membrane. In terms of biological role, part of the ABC transporter complex LolCDE involved in the translocation of mature outer membrane-directed lipoproteins, from the inner membrane to the periplasmic chaperone, LolA. Responsible for the formation of the LolA-lipoprotein complex in an ATP-dependent manner. The protein is Lipoprotein-releasing system ATP-binding protein LolD of Oleidesulfovibrio alaskensis (strain ATCC BAA-1058 / DSM 17464 / G20) (Desulfovibrio alaskensis).